The primary structure comprises 218 residues: ATP phosphoribosyltransferase (218 aa).

The protein belongs to the ATP phosphoribosyltransferase family. Short subfamily. Heteromultimer composed of HisG and HisZ subunits.

The protein resides in the cytoplasm. The enzyme catalyses 1-(5-phospho-beta-D-ribosyl)-ATP + diphosphate = 5-phospho-alpha-D-ribose 1-diphosphate + ATP. It functions in the pathway amino-acid biosynthesis; L-histidine biosynthesis; L-histidine from 5-phospho-alpha-D-ribose 1-diphosphate: step 1/9. In terms of biological role, catalyzes the condensation of ATP and 5-phosphoribose 1-diphosphate to form N'-(5'-phosphoribosyl)-ATP (PR-ATP). Has a crucial role in the pathway because the rate of histidine biosynthesis seems to be controlled primarily by regulation of HisG enzymatic activity. This chain is ATP phosphoribosyltransferase, found in Burkholderia mallei (strain ATCC 23344).